Here is a 1182-residue protein sequence, read N- to C-terminus: Intraflagellar transport protein 122 homolog (1182 aa).

WD repeat units lie at residues 10–50 (KAEQ…QPLK), 51–91 (GHKD…LKYT), 93–129 (NDSI…VSKH), 131–169 (SSSK…KVKI), 174–217 (GSLS…IGKD), 219–258 (PLNF…LGTV), 260–300 (EQNS…HGLY), and 453–492 (KQAT…LLFQ).

In terms of assembly, component of the IFT complex A (IFT-A) complex. IFT-A complex is divided into a core subcomplex composed of IFT122:IFT140:WDR19 which is associated with TULP3 and a peripheral subcomplex composed of IFT43:WDR35:TTC21B. Interacts with IFT43:WDR35; the interaction connects the 2 IFT-A subcomplexes. Interacts with IFTAP; the interaction associates IFTAP with IFT-A complex.

It is found in the cell projection. It localises to the cilium. Its subcellular location is the cytoplasm. The protein localises to the cytoskeleton. The protein resides in the cilium basal body. In terms of biological role, as a component of the IFT complex A (IFT-A), a complex required for retrograde ciliary transport and entry into cilia of G protein-coupled receptors (GPCRs), it is required in ciliogenesis and ciliary protein trafficking. Involved in cilia formation during neuronal patterning. Acts as a negative regulator of Shh signaling. Required to recruit TULP3 to primary cilia. This is Intraflagellar transport protein 122 homolog from Mus musculus (Mouse).